Here is a 347-residue protein sequence, read N- to C-terminus: Phosphoribosylformylglycinamidine cyclo-ligase (347 aa).

It belongs to the AIR synthase family.

The protein resides in the cytoplasm. The catalysed reaction is 2-formamido-N(1)-(5-O-phospho-beta-D-ribosyl)acetamidine + ATP = 5-amino-1-(5-phospho-beta-D-ribosyl)imidazole + ADP + phosphate + H(+). It participates in purine metabolism; IMP biosynthesis via de novo pathway; 5-amino-1-(5-phospho-D-ribosyl)imidazole from N(2)-formyl-N(1)-(5-phospho-D-ribosyl)glycinamide: step 2/2. The protein is Phosphoribosylformylglycinamidine cyclo-ligase of Yersinia enterocolitica serotype O:8 / biotype 1B (strain NCTC 13174 / 8081).